A 378-amino-acid chain; its full sequence is Actin-related protein 2/3 complex subunit 1B (378 aa).

WD repeat units lie at residues 8 to 47, 53 to 92, 97 to 138, 143 to 182, 203 to 242, 257 to 295, and 331 to 375; these read RFAESITCHAWSPDLSMVALCPNNTEVHIYKSLSQDHWER, KHDQIVSGIDWSSKSNKIVTVSHDRNSYVWSLEGAEWVPT, RLNR…WVSK, RHESSVTSVAWHPNNVLLATTSTDGKCRVFSTFIKGVDTK, LSYSWAFGVKWSPSGNTLAYVGHSSMIYFVDDVGPSPLAQ, ISEKMVIGVGYDSNPMVFAADDTGIWSFIRYIGEKKAAS, and VHDN…QELG. Positions 319-340 are disordered; it reads TTANDASDSRGGVHDNSITSIV.

Belongs to the WD repeat ARPC1 family. In terms of assembly, component of the Arp2/3 complex composed of ARP2, ARP3, ARPC1/p41-ARC, ARPC2/p34-ARC, ARPC3/p21-ARC, ARPC4/p20-ARC and ARPC5/p16-ARC. In terms of tissue distribution, expressed at low levels in all tissues with a relatively highest expression in inflorescences.

The protein localises to the cytoplasm. It localises to the cytoskeleton. Functions as a component of the Arp2/3 complex which is involved in regulation of actin polymerization and together with an activating nucleation-promoting factor (NPF) mediates the formation of branched actin networks. Arp2/3 complex plays a critical role in the control of cell morphogenesis via the modulation of cell polarity development. This Arabidopsis thaliana (Mouse-ear cress) protein is Actin-related protein 2/3 complex subunit 1B (ARPC1B).